The sequence spans 136 residues: Small ribosomal subunit protein uS9 (136 aa).

It belongs to the universal ribosomal protein uS9 family.

This chain is Small ribosomal subunit protein uS9, found in Borrelia garinii subsp. bavariensis (strain ATCC BAA-2496 / DSM 23469 / PBi) (Borreliella bavariensis).